Reading from the N-terminus, the 331-residue chain is 6-phosphogluconolactonase (331 aa).

The protein belongs to the cycloisomerase 2 family.

The enzyme catalyses 6-phospho-D-glucono-1,5-lactone + H2O = 6-phospho-D-gluconate + H(+). Its pathway is carbohydrate degradation; pentose phosphate pathway; D-ribulose 5-phosphate from D-glucose 6-phosphate (oxidative stage): step 2/3. Functionally, catalyzes the hydrolysis of 6-phosphogluconolactone to 6-phosphogluconate. This Salmonella typhi protein is 6-phosphogluconolactonase.